Consider the following 297-residue polypeptide: Phosphoribosylaminoimidazole-succinocarboxamide synthase (297 aa).

This sequence belongs to the SAICAR synthetase family.

It carries out the reaction 5-amino-1-(5-phospho-D-ribosyl)imidazole-4-carboxylate + L-aspartate + ATP = (2S)-2-[5-amino-1-(5-phospho-beta-D-ribosyl)imidazole-4-carboxamido]succinate + ADP + phosphate + 2 H(+). It participates in purine metabolism; IMP biosynthesis via de novo pathway; 5-amino-1-(5-phospho-D-ribosyl)imidazole-4-carboxamide from 5-amino-1-(5-phospho-D-ribosyl)imidazole-4-carboxylate: step 1/2. In Saccharopolyspora erythraea (strain ATCC 11635 / DSM 40517 / JCM 4748 / NBRC 13426 / NCIMB 8594 / NRRL 2338), this protein is Phosphoribosylaminoimidazole-succinocarboxamide synthase.